We begin with the raw amino-acid sequence, 264 residues long: Caffeoyl-CoA O-methyltransferase 2 (264 aa).

The segment covering 1-20 has biased composition (low complexity); that stretch reads MATTATEATKTTAPAQEQQA. Residues 1-37 are disordered; that stretch reads MATTATEATKTTAPAQEQQANGNGNGEQKTRHSEVGH. Residues 28 to 37 are compositionally biased toward basic and acidic residues; that stretch reads QKTRHSEVGH. Residue lysine 38 coordinates substrate. Residues threonine 80, glutamate 102, 104–105, serine 110, aspartate 128, and alanine 157 contribute to the S-adenosyl-L-methionine site; that span reads GV. Aspartate 180 contributes to the substrate binding site. Position 180 (aspartate 180) interacts with a divalent metal cation. Aspartate 182 lines the S-adenosyl-L-methionine pocket. Residues aspartate 206 and asparagine 207 each coordinate a divalent metal cation. Asparagine 211 lines the substrate pocket.

This sequence belongs to the class I-like SAM-binding methyltransferase superfamily. Cation-dependent O-methyltransferase family. CCoAMT subfamily. The cofactor is a divalent metal cation.

It carries out the reaction (E)-caffeoyl-CoA + S-adenosyl-L-methionine = (E)-feruloyl-CoA + S-adenosyl-L-homocysteine + H(+). Its pathway is aromatic compound metabolism; phenylpropanoid biosynthesis. Its function is as follows. Methylates caffeoyl-CoA to feruloyl-CoA and 5-hydroxyferuloyl-CoA to sinapoyl-CoA. Plays a role in the synthesis of feruloylated polysaccharides. Involved in the reinforcement of the plant cell wall. Also involved in the responding to wounding or pathogen challenge by the increased formation of cell wall-bound ferulic acid polymers. The protein is Caffeoyl-CoA O-methyltransferase 2 (CCOAOMT2) of Zea mays (Maize).